A 209-amino-acid polypeptide reads, in one-letter code: uncharacterized protein (209 aa).

The Nudix hydrolase domain maps to 1 to 167 (MRNSAGLFMI…LNTYASSNYG (167 aa)).

This is an uncharacterized protein from Orgyia pseudotsugata (Douglas-fir tussock moth).